The sequence spans 179 residues: Protein AC4 (179 aa).

It belongs to the geminiviridae protein AC4/C4 family.

Its function is as follows. Pathogenicity determinant. May act as a suppressor of RNA-mediated gene silencing, also known as post-transcriptional gene silencing (PTGS), a mechanism of plant viral defense that limits the accumulation of viral RNAs. The polypeptide is Protein AC4 (African cassava mosaic virus (isolate Nigerian) (ACMV)).